The following is a 476-amino-acid chain: Aspartyl/glutamyl-tRNA(Asn/Gln) amidotransferase subunit B (476 aa).

Belongs to the GatB/GatE family. GatB subfamily. As to quaternary structure, heterotrimer of A, B and C subunits.

It carries out the reaction L-glutamyl-tRNA(Gln) + L-glutamine + ATP + H2O = L-glutaminyl-tRNA(Gln) + L-glutamate + ADP + phosphate + H(+). It catalyses the reaction L-aspartyl-tRNA(Asn) + L-glutamine + ATP + H2O = L-asparaginyl-tRNA(Asn) + L-glutamate + ADP + phosphate + 2 H(+). Its function is as follows. Allows the formation of correctly charged Asn-tRNA(Asn) or Gln-tRNA(Gln) through the transamidation of misacylated Asp-tRNA(Asn) or Glu-tRNA(Gln) in organisms which lack either or both of asparaginyl-tRNA or glutaminyl-tRNA synthetases. The reaction takes place in the presence of glutamine and ATP through an activated phospho-Asp-tRNA(Asn) or phospho-Glu-tRNA(Gln). The sequence is that of Aspartyl/glutamyl-tRNA(Asn/Gln) amidotransferase subunit B from Listeria innocua serovar 6a (strain ATCC BAA-680 / CLIP 11262).